A 241-amino-acid polypeptide reads, in one-letter code: Chloride intracellular channel protein 1 (241 aa).

Ala2 carries the post-translational modification N-acetylalanine. Residues 2 to 90 (AEEQPQVELF…EEFLEAVLCP (89 aa)) form a required for insertion into the membrane region. Residue Lys13 is modified to N6-acetyllysine. The G-site motif lies at 24–27 (CPFS). Cysteines 24 and 59 form a disulfide. The helical transmembrane segment at 26–46 (FSQRLFMVLWLKGVTFNVTTV) threads the bilayer. Residues 93-233 (YPKLAALNPE…PDDEEIELAY (141 aa)) form the GST C-terminal domain. Lys119 bears the N6-acetyllysine mark. At Ser121 the chain carries Phosphoserine. Lys131 carries the N6-acetyllysine modification. Phosphoserine is present on residues Ser156 and Ser211. The residue at position 233 (Tyr233) is a Phosphotyrosine.

The protein belongs to the chloride channel CLIC family. As to quaternary structure, monomer. Homodimer (in vitro). Interacts with TRAPPC2. Dimerization requires a conformation change that leads to the exposure of a large hydrophobic surface. In vivo, this may lead to membrane insertion. Expressed in neonatal and adult cardiomyocytes (at protein level).

Its subcellular location is the nucleus. The protein resides in the nucleus membrane. It is found in the cytoplasm. It localises to the cell membrane. The protein localises to the endoplasmic reticulum. The catalysed reaction is L-dehydroascorbate + 2 glutathione = glutathione disulfide + L-ascorbate. The enzyme catalyses chloride(in) = chloride(out). It catalyses the reaction iodide(out) = iodide(in). It carries out the reaction thiocyanate(in) = thiocyanate(out). The catalysed reaction is nitrate(in) = nitrate(out). The enzyme catalyses bromide(in) = bromide(out). It catalyses the reaction fluoride(in) = fluoride(out). Functionally, in the soluble state, catalyzes glutaredoxin-like thiol disulfide exchange reactions with reduced glutathione as electron donor. Reduces selenite and dehydroascorbate and may act as an antioxidant during oxidative stress response. Can insert into membranes and form voltage-dependent multi-ion conductive channels. Membrane insertion seems to be redox-regulated and may occur only under oxidizing conditions. Involved in regulation of the cell cycle. This is Chloride intracellular channel protein 1 from Rattus norvegicus (Rat).